We begin with the raw amino-acid sequence, 179 residues long: UPF0227 protein Shewmr4_1727 (179 aa).

Belongs to the UPF0227 family.

This Shewanella sp. (strain MR-4) protein is UPF0227 protein Shewmr4_1727.